A 671-amino-acid polypeptide reads, in one-letter code: Spartin (671 aa).

An N-acetylmethionine modification is found at M1. One can recognise an MIT domain in the interval 16-94; the sequence is IKEAYEKAFM…LQNVRTRLEI (79 aa). Residues 110-175 are disordered; it reads VPKLYPEFPP…CPAEAPPAYS (66 aa). A compositionally biased stretch (basic and acidic residues) spans 118–128; it reads PPKDACKKSPE. S126 is modified (phosphoserine). Low complexity predominate over residues 143–158; the sequence is GSASAACAGPSGAPSA. A compositionally biased stretch (pro residues) spans 159 to 174; that stretch reads LPVPSPSCPAEAPPAY. The segment at 190–385 is ubiquitin-binding region (UBR) domain; that stretch reads DSGEFSSVGE…SIDQGSKDAR (196 aa). The LC3-interacting region (LIR); mediates interaction with MAP1LC3A AND MAP1LC3C motif lies at 193-200; sequence EFSSVGED. Positions 346–421 are disordered; that stretch reads FQIPGRSSHP…SSEEKSKELP (76 aa). K360 is covalently cross-linked (Glycyl lysine isopeptide (Lys-Gly) (interchain with G-Cter in ubiquitin)). Over residues 369–379 the composition is skewed to low complexity; sequence QSSSSGSSIDQ. Positions 384–393 are enriched in basic residues; it reads ARHKGKRGKK. The Senescence domain occupies 431 to 615; it reads ILSGASWVSW…YNIDNIGIKA (185 aa). A required for localization to lipid droplets region spans residues 435 to 507; the sequence is ASWVSWGLVK…LVDGVCTVAN (73 aa). S474 bears the Phosphoserine mark. The interval 635 to 671 is disordered; that stretch reads VERPQRESQGGATSTEGRRDIGKQVEEEKPGAGKKDK. The span at 650–671 shows a compositional bias: basic and acidic residues; the sequence is EGRRDIGKQVEEEKPGAGKKDK.

In terms of assembly, interacts with ITCH and WWP1. Interacts (via MIT domain) with IST1; leading to the recruitment of SPART to midbodies. Interacts with MAP1LC3A and MAP1LC3C. Post-translationally, ubiquitinated; ubiquitination does not require ITCH and WWP1. As to expression, brain (at protein level).

It localises to the cytoplasm. It is found in the midbody. Its subcellular location is the lipid droplet. Functionally, lipophagy receptor that plays an important role in lipid droplet (LD) turnover in motor neurons. Localizes to LDs and interacts with components of the autophagy machinery, such as MAP1LC3A/C proteins to deliver LDs to autophagosomes for degradation via lipophagy. Lipid transfer protein required for lipid droplet degradation, including by lipophagy. Can bind and transfer all lipid species found in lipid droplets, from phospholipids to triglycerides and sterol esters but the direction of lipid transfer by spartin and its cargos are unknown. May be implicated in endosomal trafficking, or microtubule dynamics, or both. Participates in cytokinesis. The polypeptide is Spartin (Mus musculus (Mouse)).